Reading from the N-terminus, the 28-residue chain is 14-3-3-like protein 4 (28 aa).

The protein belongs to the 14-3-3 family.

This is 14-3-3-like protein 4 from Pseudotsuga menziesii (Douglas-fir).